Here is a 171-residue protein sequence, read N- to C-terminus: 3-hydroxydecanoyl-[acyl-carrier-protein] dehydratase (171 aa).

His70 is a catalytic residue.

It belongs to the thioester dehydratase family. FabA subfamily. As to quaternary structure, homodimer.

The protein resides in the cytoplasm. The catalysed reaction is a (3R)-hydroxyacyl-[ACP] = a (2E)-enoyl-[ACP] + H2O. The enzyme catalyses (3R)-hydroxydecanoyl-[ACP] = (2E)-decenoyl-[ACP] + H2O. It carries out the reaction (2E)-decenoyl-[ACP] = (3Z)-decenoyl-[ACP]. The protein operates within lipid metabolism; fatty acid biosynthesis. In terms of biological role, necessary for the introduction of cis unsaturation into fatty acids. Catalyzes the dehydration of (3R)-3-hydroxydecanoyl-ACP to E-(2)-decenoyl-ACP and then its isomerization to Z-(3)-decenoyl-ACP. Can catalyze the dehydratase reaction for beta-hydroxyacyl-ACPs with saturated chain lengths up to 16:0, being most active on intermediate chain length. This is 3-hydroxydecanoyl-[acyl-carrier-protein] dehydratase from Methylobacillus flagellatus (strain ATCC 51484 / DSM 6875 / VKM B-1610 / KT).